The chain runs to 348 residues: Probable dual-specificity RNA methyltransferase RlmN (348 aa).

Catalysis depends on glutamate 90, which acts as the Proton acceptor. The region spanning 96–324 is the Radical SAM core domain; sequence AAERLTVCVS…ASVRHTRGLE (229 aa). Residues cysteine 103 and cysteine 329 are joined by a disulfide bond. [4Fe-4S] cluster contacts are provided by cysteine 110, cysteine 114, and cysteine 117. Residues 157–158, serine 187, 210–212, and asparagine 286 each bind S-adenosyl-L-methionine; these read GE and SLH. Cysteine 329 functions as the S-methylcysteine intermediate in the catalytic mechanism.

Belongs to the radical SAM superfamily. RlmN family. Requires [4Fe-4S] cluster as cofactor.

It localises to the cytoplasm. The enzyme catalyses adenosine(2503) in 23S rRNA + 2 reduced [2Fe-2S]-[ferredoxin] + 2 S-adenosyl-L-methionine = 2-methyladenosine(2503) in 23S rRNA + 5'-deoxyadenosine + L-methionine + 2 oxidized [2Fe-2S]-[ferredoxin] + S-adenosyl-L-homocysteine. It catalyses the reaction adenosine(37) in tRNA + 2 reduced [2Fe-2S]-[ferredoxin] + 2 S-adenosyl-L-methionine = 2-methyladenosine(37) in tRNA + 5'-deoxyadenosine + L-methionine + 2 oxidized [2Fe-2S]-[ferredoxin] + S-adenosyl-L-homocysteine. Functionally, specifically methylates position 2 of adenine 2503 in 23S rRNA and position 2 of adenine 37 in tRNAs. This is Probable dual-specificity RNA methyltransferase RlmN from Gloeobacter violaceus (strain ATCC 29082 / PCC 7421).